Consider the following 432-residue polypeptide: Asparagine--tRNA ligase (432 aa).

This sequence belongs to the class-II aminoacyl-tRNA synthetase family. In terms of assembly, homodimer.

The protein resides in the cytoplasm. The catalysed reaction is tRNA(Asn) + L-asparagine + ATP = L-asparaginyl-tRNA(Asn) + AMP + diphosphate + H(+). The polypeptide is Asparagine--tRNA ligase (Lactobacillus helveticus (strain DPC 4571)).